A 369-amino-acid polypeptide reads, in one-letter code: Anhydro-N-acetylmuramic acid kinase (369 aa).

12-19 is a binding site for ATP; the sequence is GTSLDGVD.

The protein belongs to the anhydro-N-acetylmuramic acid kinase family.

The enzyme catalyses 1,6-anhydro-N-acetyl-beta-muramate + ATP + H2O = N-acetyl-D-muramate 6-phosphate + ADP + H(+). It functions in the pathway amino-sugar metabolism; 1,6-anhydro-N-acetylmuramate degradation. Its pathway is cell wall biogenesis; peptidoglycan recycling. Functionally, catalyzes the specific phosphorylation of 1,6-anhydro-N-acetylmuramic acid (anhMurNAc) with the simultaneous cleavage of the 1,6-anhydro ring, generating MurNAc-6-P. Is required for the utilization of anhMurNAc either imported from the medium or derived from its own cell wall murein, and thus plays a role in cell wall recycling. This chain is Anhydro-N-acetylmuramic acid kinase, found in Escherichia coli (strain SMS-3-5 / SECEC).